The following is a 237-amino-acid chain: Ribosomal RNA large subunit methyltransferase E (237 aa).

The S-adenosyl-L-methionine site is built by Gly76, Trp78, Asp99, Asp115, and Asp139. The active-site Proton acceptor is the Lys179.

The protein belongs to the class I-like SAM-binding methyltransferase superfamily. RNA methyltransferase RlmE family.

The protein localises to the cytoplasm. It carries out the reaction uridine(2552) in 23S rRNA + S-adenosyl-L-methionine = 2'-O-methyluridine(2552) in 23S rRNA + S-adenosyl-L-homocysteine + H(+). Specifically methylates the uridine in position 2552 of 23S rRNA at the 2'-O position of the ribose in the fully assembled 50S ribosomal subunit. This is Ribosomal RNA large subunit methyltransferase E from Rhodopseudomonas palustris (strain TIE-1).